The primary structure comprises 152 residues: Small ribosomal subunit protein uS15 (152 aa).

Basic residues predominate over residues 1–16 (MARIHARRRGKSGSKR). The disordered stretch occupies residues 1–21 (MARIHARRRGKSGSKRIYRDS).

It belongs to the universal ribosomal protein uS15 family. Part of the 30S ribosomal subunit.

The chain is Small ribosomal subunit protein uS15 from Archaeoglobus fulgidus (strain ATCC 49558 / DSM 4304 / JCM 9628 / NBRC 100126 / VC-16).